Reading from the N-terminus, the 337-residue chain is Biotin synthase 1 (337 aa).

Residues 1 to 23 (MSSVLTQPLAFHPPRPAVQPREH) are disordered. In terms of domain architecture, Radical SAM core spans 57 to 284 (TRVEFATLLS…TARVRLSAGR (228 aa)). [4Fe-4S] cluster contacts are provided by Cys72, Cys76, and Cys79. The [2Fe-2S] cluster site is built by Cys116, Cys147, Cys207, and Arg279.

Belongs to the radical SAM superfamily. Biotin synthase family. In terms of assembly, homodimer. The cofactor is [4Fe-4S] cluster. [2Fe-2S] cluster serves as cofactor.

The enzyme catalyses (4R,5S)-dethiobiotin + (sulfur carrier)-SH + 2 reduced [2Fe-2S]-[ferredoxin] + 2 S-adenosyl-L-methionine = (sulfur carrier)-H + biotin + 2 5'-deoxyadenosine + 2 L-methionine + 2 oxidized [2Fe-2S]-[ferredoxin]. It participates in cofactor biosynthesis; biotin biosynthesis; biotin from 7,8-diaminononanoate: step 2/2. In terms of biological role, catalyzes the conversion of dethiobiotin (DTB) to biotin by the insertion of a sulfur atom into dethiobiotin via a radical-based mechanism. The chain is Biotin synthase 1 from Polaromonas sp. (strain JS666 / ATCC BAA-500).